Consider the following 139-residue polypeptide: TKDKSFTCTECEESFSLKSRLIAHLLIHTGEKPFDSTKCGKGFRRNQYLKEHLSTHREDRPFVCTVCGKTYKYKHGLNTHLHSHKVNTYFPCSECRKIFSSKASLDIHLRHHTEKTFPCTECDKTFKQKKNLKRHQMIH.

C2H2-type zinc fingers lie at residues 6-28 (FTCT…LLIH), 34-56 (FDST…LSTH), 62-84 (FVCT…LHSH), 90-112 (FPCS…LRHH), and 117-139 (FPCT…QMIH).

This sequence belongs to the krueppel C2H2-type zinc-finger protein family.

The protein resides in the nucleus. Its function is as follows. May be involved in transcriptional regulation. The chain is Gastrula zinc finger protein XlCGF29.1 from Xenopus laevis (African clawed frog).